The sequence spans 148 residues: Snaclec jerdonuxin subunit beta (148 aa).

Positions 1 to 23 are cleaved as a signal peptide; the sequence is MVRFIFVSFGLLVVFLSLSGIGA. 3 disulfide bridges follow: C27/C38, C55/C144, and C121/C136. The region spanning 34–145 is the C-type lectin domain; that stretch reads YDEHCYQVFQ…CSSKRYIVCK (112 aa).

Belongs to the snaclec family. Tetramer of 4 heterodimers of alpha and beta subunits; disulfide-linked. As to expression, expressed by the venom gland.

It localises to the secreted. Functionally, snaclec that strongly induces platelet aggregation, in a dose-dependent manner. This is Snaclec jerdonuxin subunit beta from Protobothrops jerdonii (Jerdon's pitviper).